We begin with the raw amino-acid sequence, 200 residues long: LIM domain-containing protein WLIM2a (200 aa).

LIM zinc-binding domains lie at glutamine 8–glutamate 68 and aspartate 107–glutamate 167.

In terms of assembly, interacts with F-actin. Expressed in roots, leaves, stems, flowers and siliques. Barely detected in pollen.

The protein resides in the cytoplasm. Its subcellular location is the cytoskeleton. Its function is as follows. Binds to actin filaments and promotes cross-linking into thick bundles. Has an actin-stabilizing activity. The actin regulatory activities are not regulated by pH and [Ca(2+)]. The chain is LIM domain-containing protein WLIM2a from Arabidopsis thaliana (Mouse-ear cress).